The primary structure comprises 211 residues: Ribosomal RNA small subunit methyltransferase G (211 aa).

Residues glycine 73, phenylalanine 78, 124–125, and arginine 137 contribute to the S-adenosyl-L-methionine site; that span reads VE.

Belongs to the methyltransferase superfamily. RNA methyltransferase RsmG family.

Its subcellular location is the cytoplasm. Specifically methylates the N7 position of a guanine in 16S rRNA. This Christiangramia forsetii (strain DSM 17595 / CGMCC 1.15422 / KT0803) (Gramella forsetii) protein is Ribosomal RNA small subunit methyltransferase G.